A 143-amino-acid chain; its full sequence is 16 kDa calcium-binding protein (143 aa).

4 EF-hand domains span residues 2–37 (SEEK…VGVC), 41–71 (ADKI…LPPR), 73–108 (KCVA…SGMD), and 109–143 (IDQN…QTYK). 19 residues coordinate Ca(2+): aspartate 15, aspartate 17, asparagine 19, glutamate 26, aspartate 49, asparagine 51, aspartate 53, lysine 55, glutamate 60, aspartate 86, aspartate 88, serine 90, lysine 92, glutamate 97, aspartate 122, asparagine 124, aspartate 126, glutamate 128, and glutamate 133.

In terms of tissue distribution, found in eggs.

Its function is as follows. Calcium-binding protein. This Schistosoma mansoni (Blood fluke) protein is 16 kDa calcium-binding protein.